A 287-amino-acid chain; its full sequence is tRNA selenocysteine 1-associated protein 1 (287 aa).

RRM domains lie at 3–86 and 96–175; these read ASLW…YATY and YSLF…VAIP.

It belongs to the RRM TRSPAP family. Component of the tRNA(Sec) complex composed at least of EEFSEC, SECISBP2, SEPHS1, SEPSECS, TRNAU1AP and tRNA(Sec). Found in a complex with tRNA(Sec). Interacts with SEPSECS. Associates with mRNP and/or polysomes. Found in a complex with EEFSEC, SECISBP2, TRNAU1AP and tRNA(Sec).

The protein resides in the nucleus. It is found in the cytoplasm. Its function is as follows. Involved in the early steps of selenocysteine biosynthesis and tRNA(Sec) charging to the later steps resulting in the cotranslational incorporation of selenocysteine into selenoproteins. Stabilizes the SECISBP2, EEFSEC and tRNA(Sec) complex. May be involved in the methylation of tRNA(Sec). Enhances efficiency of selenoproteins synthesis. The protein is tRNA selenocysteine 1-associated protein 1 (TRNAU1AP) of Bos taurus (Bovine).